The sequence spans 334 residues: L-lactate dehydrogenase B chain (334 aa).

An N-acetylalanine modification is found at Ala2. Residue Lys7 is modified to N6-acetyllysine. NAD(+)-binding positions include 30–58 (GQVGMACAISILGKSLADELALVDVLEDK) and Arg100. The residue at position 44 (Ser44) is a Phosphoserine. At Lys58 the chain carries N6-acetyllysine. Residue Arg107 participates in substrate binding. Position 119 is an N6-acetyllysine (Lys119). Asn139 is an NAD(+) binding site. 2 residues coordinate substrate: Asn139 and Arg170. Residue His194 is the Proton acceptor of the active site. At Tyr240 the chain carries Phosphotyrosine. Thr249 serves as a coordination point for substrate. Residue Lys329 is modified to N6-acetyllysine.

This sequence belongs to the LDH/MDH superfamily. LDH family. Homotetramer. Interacts with PTEN upstream reading frame protein MP31; the interaction leads to inhibition of mitochondrial lactate dehydrogenase activity, preventing conversion of lactate to pyruvate in mitochondria.

The protein resides in the cytoplasm. It localises to the mitochondrion inner membrane. It carries out the reaction (S)-lactate + NAD(+) = pyruvate + NADH + H(+). Its pathway is fermentation; pyruvate fermentation to lactate; (S)-lactate from pyruvate: step 1/1. Interconverts simultaneously and stereospecifically pyruvate and lactate with concomitant interconversion of NADH and NAD(+). The chain is L-lactate dehydrogenase B chain (Ldhb) from Rattus norvegicus (Rat).